The primary structure comprises 312 residues: tRNA pseudouridine synthase B (312 aa).

Residue D49 is the Nucleophile of the active site.

This sequence belongs to the pseudouridine synthase TruB family. Type 1 subfamily.

The catalysed reaction is uridine(55) in tRNA = pseudouridine(55) in tRNA. In terms of biological role, responsible for synthesis of pseudouridine from uracil-55 in the psi GC loop of transfer RNAs. The polypeptide is tRNA pseudouridine synthase B (Chelativorans sp. (strain BNC1)).